The primary structure comprises 388 residues: Pre-mRNA-splicing factor cwf2 (388 aa).

The interval 43–63 is disordered; sequence VKRKKQPARKQIETRPEYEME. A C3H1-type zinc finger spans residues 111-138; that stretch reads NPGSFFCLYFARGMCSEGSKCEYLHRLP. The RRM domain occupies 174–248; sequence YTLYVGGITP…ECLNVRWATT (75 aa). Residues 331-352 form a disordered region; sequence PNKSQSEEGSNDDHKSVTTTES.

The protein belongs to the RRM CWC2 family. In terms of assembly, belongs to the 40S cdc5-associated complex (or cwf complex), a spliceosome sub-complex reminiscent of a late-stage spliceosome composed of the U2, U5 and U6 snRNAs and at least brr2, cdc5, cwf2/prp3, cwf3/syf1, cwf4/syf3, cwf5/ecm2, spp42/cwf6, cwf7/spf27, cwf8, cwf9, cwf10, cwf11, cwf12, prp45/cwf13, cwf14, cwf15, cwf16, cwf17, cwf18, cwf19, cwf20, cwf21, cwf22, cwf23, cwf24, cwf25, cwf26, cyp7/cwf27, cwf28, cwf29/ist3, lea1, msl1, prp5/cwf1, prp10, prp12/sap130, prp17, prp22, sap61, sap62, sap114, sap145, slu7, smb1, smd1, smd3, smf1, smg1 and syf2.

Its subcellular location is the nucleus. Involved in the first step of pre-mRNA splicing. Required for cell growth and cell cycle control. Plays a role in the levels of the U1, U4, U5 and U6 snRNAs and the maintenance of the U4/U6 snRNA complex. May provide the link between the 'nineteen complex' NTC spliceosome protein complex and the spliceosome through the U6 snRNA. Associates predominantly with U6 snRNAs in assembled active spliceosomes. Binds directly to the internal stem-loop (ISL) domain of the U6 snRNA and to the pre-mRNA intron near the 5' splice site during the activation and catalytic phases of the spliceosome cycle. Involved in pre-mRNA splicing. This is Pre-mRNA-splicing factor cwf2 (cwf2) from Schizosaccharomyces pombe (strain 972 / ATCC 24843) (Fission yeast).